The sequence spans 92 residues: UPF0223 protein SUB0967 (92 aa).

The protein belongs to the UPF0223 family.

The polypeptide is UPF0223 protein SUB0967 (Streptococcus uberis (strain ATCC BAA-854 / 0140J)).